The sequence spans 401 residues: DNA damage checkpoint control protein RAD17 (401 aa).

Residues 367-393 are disordered; it reads KKIKLPSEEENNKNRESEDEENHCKYP. Over residues 371 to 393 the composition is skewed to basic and acidic residues; it reads LPSEEENNKNRESEDEENHCKYP. S383 is subject to Phosphoserine.

The protein belongs to the rad1 family. As to quaternary structure, component of the checkpoint clamp complex composed of DDC1, MEC3 and RAD17. The interaction with MEC3 is performed in a RAD17-dependent manner. The checkpoint clamp complex loads onto DNA. Interacts with the DNA polymerase zeta subunit REV7. 2 RAD17 subunits also form a heterotrimer with one MEC3 subunit.

Its subcellular location is the nucleus. Component of the checkpoint clamp complex involved in the surveillance mechanism that allows the DNA repair pathways to act to restore the integrity of the DNA prior to DNA synthesis or separation of the replicated chromosomes. Associates with sites of DNA damage and modulates the MEC1 signaling pathway and the activation of RAD53 in response to DNA damage at phase G1. The complex also physically regulates DNA polymerase zeta-dependent mutagenesis by controlling the access of polymerase zeta to damaged DNA. Contrary to its human counterpart, the 9-1-1 complex, the checkpoint clamp complex shows no detectable exonuclease activity. In Saccharomyces cerevisiae (strain ATCC 204508 / S288c) (Baker's yeast), this protein is DNA damage checkpoint control protein RAD17 (RAD17).